The primary structure comprises 269 residues: tRNA pseudouridine synthase A (269 aa).

The Nucleophile role is filled by Asp-51. Tyr-109 provides a ligand contact to substrate.

Belongs to the tRNA pseudouridine synthase TruA family. As to quaternary structure, homodimer.

The enzyme catalyses uridine(38/39/40) in tRNA = pseudouridine(38/39/40) in tRNA. Formation of pseudouridine at positions 38, 39 and 40 in the anticodon stem and loop of transfer RNAs. This Haemophilus influenzae (strain 86-028NP) protein is tRNA pseudouridine synthase A.